Reading from the N-terminus, the 440-residue chain is Deoxyguanosinetriphosphate triphosphohydrolase-like protein (440 aa).

The 196-residue stretch at 61–256 (RLIHSLEVSC…MEAADDLCYS (196 aa)) folds into the HD domain.

Belongs to the dGTPase family. Type 3 subfamily.

The protein is Deoxyguanosinetriphosphate triphosphohydrolase-like protein of Synechocystis sp. (strain ATCC 27184 / PCC 6803 / Kazusa).